A 51-amino-acid polypeptide reads, in one-letter code: GPLGGCCGGIKKSAAAGISGINYGIAAGLPGKCGVNIPYKISPSTDCSKVQ.

The protein belongs to the plant LTP family.

In terms of biological role, plant non-specific lipid-transfer proteins transfer phospholipids as well as galactolipids across membranes. May play a role in wax or cutin deposition in the cell walls of expanding epidermal cells and certain secretory tissues. The chain is Non-specific lipid-transfer protein from Lycium barbarum (Barbary matrimony-vine).